Consider the following 341-residue polypeptide: Phosphate acyltransferase (341 aa).

The protein belongs to the PlsX family. In terms of assembly, homodimer. Probably interacts with PlsY.

The protein localises to the cytoplasm. It carries out the reaction a fatty acyl-[ACP] + phosphate = an acyl phosphate + holo-[ACP]. It functions in the pathway lipid metabolism; phospholipid metabolism. Catalyzes the reversible formation of acyl-phosphate (acyl-PO(4)) from acyl-[acyl-carrier-protein] (acyl-ACP). This enzyme utilizes acyl-ACP as fatty acyl donor, but not acyl-CoA. This is Phosphate acyltransferase from Vibrio campbellii (strain ATCC BAA-1116).